The sequence spans 333 residues: Flap endonuclease 1 (333 aa).

An N-domain region spans residues 1 to 99 (MGVAIRDILA…ETINERREHR (99 aa)). The Mg(2+) site is built by aspartate 28, aspartate 81, glutamate 153, glutamate 155, aspartate 174, aspartate 176, and aspartate 235. The segment at 117–255 (EAYKQASASA…KTALKIVRNG (139 aa)) is I-domain. The interaction with PCNA stretch occupies residues 325–333 (TQKTLDAWF).

The protein belongs to the XPG/RAD2 endonuclease family. FEN1 subfamily. Interacts with PCNA. PCNA stimulates the nuclease activity without altering cleavage specificity. The cofactor is Mg(2+).

Functionally, structure-specific nuclease with 5'-flap endonuclease and 5'-3' exonuclease activities involved in DNA replication and repair. During DNA replication, cleaves the 5'-overhanging flap structure that is generated by displacement synthesis when DNA polymerase encounters the 5'-end of a downstream Okazaki fragment. Binds the unpaired 3'-DNA end and kinks the DNA to facilitate 5' cleavage specificity. Cleaves one nucleotide into the double-stranded DNA from the junction in flap DNA, leaving a nick for ligation. Also involved in the base excision repair (BER) pathway. Acts as a genome stabilization factor that prevents flaps from equilibrating into structures that lead to duplications and deletions. Also possesses 5'-3' exonuclease activity on nicked or gapped double-stranded DNA. The sequence is that of Flap endonuclease 1 from Methanoculleus marisnigri (strain ATCC 35101 / DSM 1498 / JR1).